The following is a 208-amino-acid chain: Ribosomal RNA small subunit methyltransferase J (208 aa).

S-adenosyl-L-methionine contacts are provided by residues 54–55, 70–71, and Asp-122; these read RD and ER.

Belongs to the methyltransferase superfamily. RsmJ family.

The protein resides in the cytoplasm. It carries out the reaction guanosine(1516) in 16S rRNA + S-adenosyl-L-methionine = N(2)-methylguanosine(1516) in 16S rRNA + S-adenosyl-L-homocysteine + H(+). Its function is as follows. Specifically methylates the guanosine in position 1516 of 16S rRNA. This Agrobacterium fabrum (strain C58 / ATCC 33970) (Agrobacterium tumefaciens (strain C58)) protein is Ribosomal RNA small subunit methyltransferase J.